A 508-amino-acid chain; its full sequence is Strychnine-11-hydroxylase (508 aa).

A helical membrane pass occupies residues 5–25 (MSFLLLFSLCFLIHCFVFLLI). Cysteine 445 contributes to the heme binding site.

It belongs to the cytochrome P450 family. It depends on heme as a cofactor.

It is found in the membrane. The enzyme catalyses beta-colubrine + reduced [NADPH--hemoprotein reductase] + O2 = 11-demethylbrucine + oxidized [NADPH--hemoprotein reductase] + H2O + H(+). It functions in the pathway alkaloid biosynthesis. Monooxygenase involved in the biosynthesis of curare monoterpene indole alkaloids (MIAs), natural products such as strychnine, a neurotoxic compound used as a pesticide to control rodents, and its pharmacologically active derivatives, including brucine, used to regulate blood pressure. Curare alkaloids act as animal glycine receptor antagonists. Catalyzes the conversion of beta-colubrine to 11-deMe brucine. The polypeptide is Strychnine-11-hydroxylase (Strychnos nux-vomica (Poison nut)).